A 182-amino-acid polypeptide reads, in one-letter code: Peptidyl-tRNA hydrolase (182 aa).

Tyr14 is a tRNA binding site. His19 serves as the catalytic Proton acceptor. Phe60, Asn62, and Asn106 together coordinate tRNA.

This sequence belongs to the PTH family. Monomer.

The protein localises to the cytoplasm. It carries out the reaction an N-acyl-L-alpha-aminoacyl-tRNA + H2O = an N-acyl-L-amino acid + a tRNA + H(+). Its function is as follows. Hydrolyzes ribosome-free peptidyl-tRNAs (with 1 or more amino acids incorporated), which drop off the ribosome during protein synthesis, or as a result of ribosome stalling. Catalyzes the release of premature peptidyl moieties from peptidyl-tRNA molecules trapped in stalled 50S ribosomal subunits, and thus maintains levels of free tRNAs and 50S ribosomes. The chain is Peptidyl-tRNA hydrolase from Campylobacter concisus (strain 13826).